We begin with the raw amino-acid sequence, 290 residues long: Protease HtpX homolog (290 aa).

2 helical membrane passes run 4–24 and 39–59; these read ILLFVLTNVMVVAVLGIVASL and TALLGFALVMGFGGAIISLLI. Position 144 (H144) interacts with Zn(2+). Residue E145 is part of the active site. H148 provides a ligand contact to Zn(2+). 2 consecutive transmembrane segments (helical) span residues 159-179 and 199-219; these read LIQGVMNTFVVFLSRVIGYAV and VSTIVLDIVLGFAAAIVVAWF. Zn(2+) is bound at residue E224.

It belongs to the peptidase M48B family. Zn(2+) is required as a cofactor.

It is found in the cell inner membrane. This is Protease HtpX homolog from Variovorax paradoxus (strain S110).